We begin with the raw amino-acid sequence, 225 residues long: MIEQTTIALLSGGIDSATAACIAMEAGQKVIGLSFDYGQRHLKELQAAADLAKNLNLEDHITIKIDLSSWGGSSLTDTSQAIPTKGIQKNTIPNTYVPGRNTIFVAIGLSLAEARGANRIALGINAMDYSGYPDCRPDYLKAYQELANLSSRVGREGKGIKLWAPLLDWEKTKIFEEALRLKIPIEKTWSCYQGESKPCGRCDSCRIRDKALKEIGREDLCSQNI.

10–20 (LSGGIDSATAA) lines the ATP pocket. Residues Cys-191, Cys-199, Cys-202, and Cys-205 each contribute to the Zn(2+) site.

The protein belongs to the QueC family. The cofactor is Zn(2+).

The catalysed reaction is 7-carboxy-7-deazaguanine + NH4(+) + ATP = 7-cyano-7-deazaguanine + ADP + phosphate + H2O + H(+). It participates in purine metabolism; 7-cyano-7-deazaguanine biosynthesis. Functionally, catalyzes the ATP-dependent conversion of 7-carboxy-7-deazaguanine (CDG) to 7-cyano-7-deazaguanine (preQ(0)). The chain is 7-cyano-7-deazaguanine synthase from Prochlorococcus marinus (strain NATL1A).